The sequence spans 89 residues: Small ribosomal subunit protein uS15 (89 aa).

It belongs to the universal ribosomal protein uS15 family. As to quaternary structure, part of the 30S ribosomal subunit. Forms a bridge to the 50S subunit in the 70S ribosome, contacting the 23S rRNA.

In terms of biological role, one of the primary rRNA binding proteins, it binds directly to 16S rRNA where it helps nucleate assembly of the platform of the 30S subunit by binding and bridging several RNA helices of the 16S rRNA. Its function is as follows. Forms an intersubunit bridge (bridge B4) with the 23S rRNA of the 50S subunit in the ribosome. The polypeptide is Small ribosomal subunit protein uS15 (Porphyromonas gingivalis (strain ATCC 33277 / DSM 20709 / CIP 103683 / JCM 12257 / NCTC 11834 / 2561)).